Here is a 200-residue protein sequence, read N- to C-terminus: Large ribosomal subunit protein uL4 (200 aa).

The segment at 43–71 (RAQKTRAEVSGSGKKPWRQKGTGRARSGD) is disordered.

It belongs to the universal ribosomal protein uL4 family. In terms of assembly, part of the 50S ribosomal subunit.

Functionally, one of the primary rRNA binding proteins, this protein initially binds near the 5'-end of the 23S rRNA. It is important during the early stages of 50S assembly. It makes multiple contacts with different domains of the 23S rRNA in the assembled 50S subunit and ribosome. In terms of biological role, forms part of the polypeptide exit tunnel. The chain is Large ribosomal subunit protein uL4 from Histophilus somni (strain 129Pt) (Haemophilus somnus).